Consider the following 67-residue polypeptide: Conotoxin Cal12.1p2 (67 aa).

Positions 1-21 (DLITNSYTRGKPRHVTSWRNL) are excised as a propeptide.

In terms of processing, contains 4 disulfide bonds. As to expression, expressed by the venom duct.

The protein resides in the secreted. The protein is Conotoxin Cal12.1p2 of Californiconus californicus (California cone).